The following is a 101-amino-acid chain: Urease subunit beta (101 aa).

It belongs to the urease beta subunit family. In terms of assembly, heterotrimer of UreA (gamma), UreB (beta) and UreC (alpha) subunits. Three heterotrimers associate to form the active enzyme.

It localises to the cytoplasm. The enzyme catalyses urea + 2 H2O + H(+) = hydrogencarbonate + 2 NH4(+). It functions in the pathway nitrogen metabolism; urea degradation; CO(2) and NH(3) from urea (urease route): step 1/1. This chain is Urease subunit beta, found in Allorhizobium ampelinum (strain ATCC BAA-846 / DSM 112012 / S4) (Agrobacterium vitis (strain S4)).